Consider the following 822-residue polypeptide: Fibroblast growth factor receptor 1 (822 aa).

The N-terminal stretch at 1-21 is a signal peptide; that stretch reads MWSWKCLLFWAVLVTATLCTA. Residues 22 to 376 are Extracellular-facing; that stretch reads RPSPTLPEQA…AVMTSPLYLE (355 aa). Residues 25–119 form the Ig-like C2-type 1 domain; it reads PTLPEQAQPW…DTTYFSVNVS (95 aa). The cysteines at positions 55 and 101 are disulfide-linked. 2 N-linked (GlcNAc...) asparagine glycosylation sites follow: Asn77 and Asn117. Residues 120 to 154 form a disordered region; that stretch reads DALPSSEDDDDDDDSSSEEKETDNTKPNRMPVAPY. Residues 125–135 are compositionally biased toward acidic residues; it reads SEDDDDDDDSS. The span at 136–145 shows a compositional bias: basic and acidic residues; it reads SEEKETDNTK. 2 consecutive Ig-like C2-type domains span residues 158–246 and 255–357; these read PEKM…YQLD and PILQ…AWLT. Residues 160-177 form a heparin-binding region; that stretch reads KMEKKLHAVPAAKTVKFK. A disulfide bond links Cys178 and Cys230. N-linked (GlcNAc...) asparagine glycosylation is found at Asn227, Asn240, Asn264, Asn296, Asn317, and Asn330. The cysteines at positions 277 and 341 are disulfide-linked. Residues 377–397 traverse the membrane as a helical segment; it reads IIIYCTGAFLISCMVGSVIVY. Topologically, residues 398 to 822 are cytoplasmic; that stretch reads KMKSGTKKSD…QLANGGLKRR (425 aa). Tyr463 bears the Phosphotyrosine; by autocatalysis mark. The Protein kinase domain occupies 478-767; the sequence is LVLGKPLGEG…VALTSNQEYL (290 aa). ATP is bound by residues 484 to 490, Lys514, 562 to 564, and Asn568; these read LGEGCFG and EYA. Phosphotyrosine; by autocatalysis is present on residues Tyr583 and Tyr585. Asp623 acts as the Proton acceptor in catalysis. ATP contacts are provided by Arg627 and Asp641. Phosphotyrosine; by autocatalysis is present on residues Tyr653, Tyr654, Tyr730, and Tyr766. Residues 778 to 792 show a composition bias toward polar residues; the sequence is PSFPDTRSSTCSSGE. Positions 778-822 are disordered; the sequence is PSFPDTRSSTCSSGEDSVFSHEPLPEEPCLPRHPAQLANGGLKRR.

This sequence belongs to the protein kinase superfamily. Tyr protein kinase family. Fibroblast growth factor receptor subfamily. As to quaternary structure, monomer. Homodimer after ligand binding. Interacts predominantly with FGF1 and FGF2, but can also interact with FGF3, FGF4, FGF5, FGF6, FGF8, FGF10, FGF19, FGF21, FGF22 and FGF23 (in vitro). Ligand specificity is determined by tissue-specific expression of isoforms, and differences in the third Ig-like domain are crucial for ligand specificity. Affinity for fibroblast growth factors (FGFs) is increased by heparan sulfate glycosaminoglycans that function as coreceptors. Likewise, KLB increases the affinity for FGF19, FGF21 and FGF23. Interacts (phosphorylated on Tyr-766) with PLCG1 (via SH2 domains). Interacts with FRS2. Interacts with RPS6KA1. Interacts (via C-terminus) with NEDD4 (via WW3 domain). Interacts with KL. Interacts with SHB (via SH2 domain). Interacts with GRB10. Interacts with ANOS1; this interaction does not interfere with FGF2-binding to FGFR1, but prevents binding of heparin-bound FGF2. Interacts with SOX2 and SOX3. Interacts with FLRT1, FLRT2 and FLRT3. Found in a ternary complex with FGF1 and ITGAV:ITGB3. In terms of processing, autophosphorylated. Binding of FGF family members together with heparan sulfate proteoglycan or heparin promotes receptor dimerization and autophosphorylation on tyrosine residues. Autophosphorylation occurs in trans between the two FGFR molecules present in the dimer and proceeds in a highly ordered manner. Initial autophosphorylation at Tyr-653 increases the kinase activity by a factor of 50 to 100. After this, Tyr-583 becomes phosphorylated, followed by phosphorylation of Tyr-463, Tyr-766, Tyr-583 and Tyr-585. In a third stage, Tyr-654 is autophosphorylated, resulting in a further tenfold increase of kinase activity. Phosphotyrosine residues provide docking sites for interacting proteins and so are crucial for FGFR1 function and its regulation. Ubiquitinated. FGFR1 is rapidly ubiquitinated by NEDD4 after autophosphorylation, leading to internalization and lysosomal degradation. CBL is recruited to activated FGFR1 via FRS2 and GRB2, and mediates ubiquitination and subsequent degradation of FGFR1. Post-translationally, N-glycosylated in the endoplasmic reticulum. The N-glycan chains undergo further maturation to an Endo H-resistant form in the Golgi apparatus. As to expression, detected in astrocytoma, neuroblastoma and adrenal cortex cell lines. Some isoforms are detected in foreskin fibroblast cell lines, however isoform 17, isoform 18 and isoform 19 are not detected in these cells.

It localises to the cell membrane. It is found in the nucleus. Its subcellular location is the cytoplasm. The protein resides in the cytosol. The protein localises to the cytoplasmic vesicle. It carries out the reaction L-tyrosyl-[protein] + ATP = O-phospho-L-tyrosyl-[protein] + ADP + H(+). With respect to regulation, present in an inactive conformation in the absence of bound ligand. Ligand binding leads to dimerization and activation by sequential autophosphorylation on tyrosine residues. Inhibited by ARQ 069; this compound maintains the kinase in an inactive conformation and inhibits autophosphorylation. Inhibited by PD173074. In terms of biological role, tyrosine-protein kinase that acts as a cell-surface receptor for fibroblast growth factors and plays an essential role in the regulation of embryonic development, cell proliferation, differentiation and migration. Required for normal mesoderm patterning and correct axial organization during embryonic development, normal skeletogenesis and normal development of the gonadotropin-releasing hormone (GnRH) neuronal system. Phosphorylates PLCG1, FRS2, GAB1 and SHB. Ligand binding leads to the activation of several signaling cascades. Activation of PLCG1 leads to the production of the cellular signaling molecules diacylglycerol and inositol 1,4,5-trisphosphate. Phosphorylation of FRS2 triggers recruitment of GRB2, GAB1, PIK3R1 and SOS1, and mediates activation of RAS, MAPK1/ERK2, MAPK3/ERK1 and the MAP kinase signaling pathway, as well as of the AKT1 signaling pathway. Promotes phosphorylation of SHC1, STAT1 and PTPN11/SHP2. In the nucleus, enhances RPS6KA1 and CREB1 activity and contributes to the regulation of transcription. FGFR1 signaling is down-regulated by IL17RD/SEF, and by FGFR1 ubiquitination, internalization and degradation. This is Fibroblast growth factor receptor 1 (FGFR1) from Homo sapiens (Human).